Here is a 753-residue protein sequence, read N- to C-terminus: Polyadenylate-binding protein, cytoplasmic and nuclear (753 aa).

Residues 1–43 (MSAEASTTPAAETPVNGTPETSTTPAAPAAEATAAETAAPSTS) show a composition bias toward low complexity. Positions 1 to 49 (MSAEASTTPAAETPVNGTPETSTTPAAPAAEATAAETAAPSTSQPHSAS) are disordered. 4 consecutive RRM domains span residues 48–126 (ASLY…WSQR), 136–213 (GNVF…HHIS), 229–306 (TNVY…RAQK), and 332–460 (VNLY…LAQR). 3 disordered regions span residues 363–417 (VMRD…SDKK), 607–649 (RGPG…PAAG), and 727–753 (GTEG…ENKS). A compositionally biased stretch (basic and acidic residues) spans 376–417 (DSDKEKKEESKEEKPEAAEKTEEAAKESGDDQDKENKKSDKK). Over residues 607–619 (RGPGYGQGRGGVP) the composition is skewed to gly residues. Residues 633–649 (QNAQPAAGRGEEAPAAG) are compositionally biased toward low complexity. One can recognise a PABC domain in the interval 647 to 724 (AAGLTAQSLA…ALSVYDEYMK (78 aa)). Residues 737 to 753 (PKPKEAATEESTEENKS) show a composition bias toward basic and acidic residues.

Belongs to the polyadenylate-binding protein type-1 family.

The protein localises to the cytoplasm. It is found in the nucleus. Functionally, binds the poly(A) tail of mRNA. Appears to be an important mediator of the multiple roles of the poly(A) tail in mRNA biogenesis, stability and translation. In the nucleus, involved in both mRNA cleavage and polyadenylation. Is also required for efficient mRNA export to the cytoplasm. Acts in concert with a poly(A)-specific nuclease (PAN) to affect poly(A) tail shortening, which may occur concomitantly with either nucleocytoplasmic mRNA transport or translational initiation. In the cytoplasm, stimulates translation initiation and regulates mRNA decay through translation termination-coupled poly(A) shortening, probably mediated by PAN. The protein is Polyadenylate-binding protein, cytoplasmic and nuclear (pab1) of Aspergillus terreus (strain NIH 2624 / FGSC A1156).